Reading from the N-terminus, the 79-residue chain is uncharacterized protein (79 aa).

This is an uncharacterized protein from Sulfolobus islandicus filamentous virus (isolate Iceland/Hveragerdi) (SIFV).